The primary structure comprises 205 residues: Large ribosomal subunit protein uL18 (205 aa).

This sequence belongs to the universal ribosomal protein uL18 family. Part of the 50S ribosomal subunit. Contacts the 5S and 23S rRNAs.

In terms of biological role, this is one of the proteins that bind and probably mediate the attachment of the 5S RNA into the large ribosomal subunit, where it forms part of the central protuberance. In Haloquadratum walsbyi (strain DSM 16790 / HBSQ001), this protein is Large ribosomal subunit protein uL18.